The following is a 58-amino-acid chain: Small ribosomal subunit protein bS21 (58 aa).

A disordered region spans residues 24-58 (TKAGTLQEARKREHYEKPSVKRKRKSEAARKRKKI). Residues 31–42 (EARKREHYEKPS) show a composition bias toward basic and acidic residues. The span at 43–58 (VKRKRKSEAARKRKKI) shows a compositional bias: basic residues.

This sequence belongs to the bacterial ribosomal protein bS21 family.

This Streptococcus thermophilus (strain CNRZ 1066) protein is Small ribosomal subunit protein bS21.